The sequence spans 1126 residues: Translation initiation factor IF-2 (1126 aa).

Residues 63-519 are disordered; the sequence is LSINKPSIKK…TTRQRQKRRA (457 aa). The span at 70 to 83 shows a compositional bias: basic and acidic residues; the sequence is IKKDNFKQNKEDKS. Over residues 93-111 the composition is skewed to low complexity; that stretch reads PLKNNSNKKPLLIKPLNKP. Polar residues predominate over residues 116 to 151; that stretch reads KISNQLQNPNKPNIVNSSQSRANLTNTNSKPSQNFN. The segment covering 161 to 171 has biased composition (pro residues); sequence TPPPIKSPAKP. Polar residues predominate over residues 181–195; it reads NINNNVKSSESSQNI. Low complexity-rich tracts occupy residues 211–224 and 240–252; these read NTNK…NNRK and IINP…NKQN. A compositionally biased stretch (polar residues) spans 254–264; it reads AFKQTASNRPG. 2 stretches are compositionally biased toward low complexity: residues 291–315 and 327–349; these read NRQG…GLRN and NRQG…NRPG. Residues 429–443 show a composition bias toward basic and acidic residues; that stretch reads GKTDWDDSAKLEALR. Basic residues predominate over residues 501–517; sequence KQFKKKKKETTRQRQKR. The tr-type G domain maps to 618-790; it reads RRPPVITVMG…ILLVSDVEDL (173 aa). Positions 627 to 634 are G1; the sequence is GHVDHGKT. 627 to 634 is a binding site for GTP; the sequence is GHVDHGKT. The interval 652–656 is G2; it reads GITQH. Residues 677–680 form a G3 region; the sequence is DTPG. GTP contacts are provided by residues 677–681 and 731–734; these read DTPGH and NKID. The G4 stretch occupies residues 731-734; that stretch reads NKID. A G5 region spans residues 767–769; it reads SAI.

This sequence belongs to the TRAFAC class translation factor GTPase superfamily. Classic translation factor GTPase family. IF-2 subfamily.

The protein resides in the cytoplasm. One of the essential components for the initiation of protein synthesis. Protects formylmethionyl-tRNA from spontaneous hydrolysis and promotes its binding to the 30S ribosomal subunits. Also involved in the hydrolysis of GTP during the formation of the 70S ribosomal complex. This chain is Translation initiation factor IF-2, found in Prochlorococcus marinus (strain AS9601).